A 199-amino-acid chain; its full sequence is A-type ATP synthase subunit E (199 aa).

It belongs to the V-ATPase E subunit family. Has multiple subunits with at least A(3), B(3), C, D, E, F, H, I and proteolipid K(x).

The protein resides in the cell membrane. Its function is as follows. Component of the A-type ATP synthase that produces ATP from ADP in the presence of a proton gradient across the membrane. This chain is A-type ATP synthase subunit E, found in Pyrococcus abyssi (strain GE5 / Orsay).